The chain runs to 7158 residues: Twitchin (7158 aa).

Ig-like domains follow at residues 5–97 (PRFT…INLN) and 111–204 (PSFV…LALN). 2 disulfides stabilise this stretch: Cys25-Cys81 and Cys132-Cys188. 4 disordered regions span residues 204-381 (NFEE…PIVL), 473-639 (EEEL…TKLR), 658-732 (KKVK…DSMA), and 763-955 (EVKE…IDMR). Positions 220-238 (TASPRPSSRGPGSRPSSPK) are enriched in low complexity. Basic and acidic residues-rich tracts occupy residues 242-259 (KSREGTPKRTLKPREGSP) and 279-291 (ESRRSSRTDKMEV). Composition is skewed to low complexity over residues 319 to 340 (SPSTRKSPSRKSASPTPSRKGS) and 347 to 368 (SGTTGASASATSATSGGSASSD). In terms of domain architecture, Ig-like 3 spans 377 to 466 (PPIVLEASRS…GEGQSSAMVK (90 aa)). The segment covering 504-513 (RVARRSKSKS) has biased composition (basic residues). The span at 514 to 523 (KSPAPQAKKS) shows a compositional bias: low complexity. Composition is skewed to basic and acidic residues over residues 529–540 (GRQEASEVEHKR) and 601–618 (KTDSPPKQDDMFSRDTLL). The segment covering 620–630 (KTTTSTKNESS) has biased composition (low complexity). A Kelch 1 repeat occupies 718–764 (VKSGAGGLEKSDSMASLKKLDLKKGKIDDNSDGAFKVQLKKVVKKEV). Composition is skewed to basic and acidic residues over residues 763–813 (EVKE…DKPK), 837–850 (KEVEEKSTSEELKA), 885–897 (KAHDDTNELEGIK), and 917–955 (SESRRGSVFGELRRGSRAPRDSADNSRRDSIRRSSIDMR). The Ig-like 4 domain occupies 980–1072 (PKIVEVPENV…DSADVKLLVT (93 aa)). Positions 1088-1118 (SQAGFQKDGEGGGAGGGGGEKKPMTEAERRQ) are disordered. Over residues 1106–1118 (GEKKPMTEAERRQ) the composition is skewed to basic and acidic residues. 3 Ig-like domains span residues 1122–1213 (PGKK…AQLT), 1217–1306 (PPMK…SKVQ), and 1312–1398 (PRHT…AQLI). An intrachain disulfide couples Cys1150 to Cys1201. Fibronectin type-III domains lie at 1598 to 1690 (PKGP…AKNP), 1696 to 1791 (KPKN…MKAK), 1891 to 1988 (PPKG…IKDP), 1994 to 2087 (KPGR…AKPK), 2189 to 2282 (PNGP…AKNP), 2288 to 2383 (KTGT…AKPR), 2483 to 2576 (PLGP…AKNP), and 2579 to 2675 (VPGK…AKPR). The Kelch 2 repeat unit spans residues 2014–2058 (PPHKDGGAPIEEYIVEVRDPDTKEWKEVKRVPDTNASISGLKEGK). The region spanning 2086 to 2181 (PKFIPAWLKH…GADEEKANLT (96 aa)) is the Ig-like 8 domain. The stretch at 2207–2253 (WKPPDDDGGEPIEYYEVEKLDTATGRWVPCAKVKDTKAHIDGLKKGQ) is one Kelch 3 repeat. Basic and acidic residues predominate over residues 2266-2287 (GASDALSTDKDTKAKNPYDEPG). The interval 2266 to 2295 (GASDALSTDKDTKAKNPYDEPGKTGTPDVV) is disordered. The Kelch 4 repeat unit spans residues 2502–2547 (KVPEDDGGAPIDHYEIEKMDLATGRWVPCGRSETTKTTVPNLQPGH). In terms of domain architecture, Ig-like 9 spans 2679–2763 (PRIHREDLSD…TNINGTDSVT (85 aa)). Fibronectin type-III domains lie at 2775–2868 (PKGP…AKNP) and 2874–2968 (RPGR…AKPR). A Kelch 5 repeat occupies 2793–2839 (WKPPEDDGGEPIEFYEIEKMNTKDGIWVPCGRSGDTHFTVDSLNKGD). A disordered region spans residues 2849–2901 (NSEGPSDPLETETDILAKNPFDRPDRPGRPEPTDWDSDHVDLKWDPPLSDGGA). Over residues 2868-2892 (PFDRPDRPGRPEPTDWDSDHVDLKW) the composition is skewed to basic and acidic residues. An Ig-like 10 domain is found at 2972–3062 (PHIDRDALKN…GEDEATVKIN (91 aa)). Fibronectin type-III domains follow at residues 3070–3165 (PNGP…AKDP) and 3171–3265 (KTNA…AKAR). The stretch at 3089 to 3134 (RAPDDDGGIPIENYVIEKYDTASGRWVPAAKVAGDKTTAVVDGLIP) is one Kelch 6 repeat. The region spanning 3268-3358 (PPVIDRNSIQ…GTDTAEVKVT (91 aa)) is the Ig-like 11 domain. 2 consecutive Fibronectin type-III domains span residues 3365-3459 (SPRG…AKDP) and 3465-3559 (KPGT…AKPR). The stretch at 3384-3430 (WKEPEDDGGAEISHYVIEKQDAATGRWTACGESKDTNFHVDDLTQGH) is one Kelch 7 repeat. An Ig-like 12 domain is found at 3563-3653 (PKINRDMFVA…GKDEHEVDVN (91 aa)). Fibronectin type-III domains lie at 3661–3753 (PEGP…AKNP), 3759–3853 (APTD…AKPR), 3954–4047 (PEGP…AKNQ), 4053–4146 (PVDK…TKAR), 4246–4340 (PEGP…AKDP), and 4346–4440 (KPGR…TAKP). Residues 3972 to 4018 (WKPPTDNGGTDVLHYIVEKMDTSRGTWQEVGTFPDCTAKVNKLVPGK) form a Kelch 8 repeat. Kelch repeat units follow at residues 4265–4310 (KPPK…LTEG) and 4365–4410 (DPPR…RVQK). The Ig-like 13 domain occupies 4445–4531 (PKFDLDLDGK…GEAEANIKIT (87 aa)). Fibronectin type-III domains are found at residues 4538 to 4631 (APEN…IKDP), 4637 to 4733 (APST…CRPY), 4739 to 4834 (APDA…IEEQ), 4936 to 5028 (PTGP…AKNP), 5034 to 5129 (APGQ…ADNA), 5231 to 5326 (SPQH…VAKY), 5333 to 5427 (QPEA…LKSR), and 5430 to 5528 (PPGP…IQES). A Kelch 11 repeat occupies 4557–4602 (DAPKDDGGAEIAGYKIEYQEVGSQIWDKVPGLISGTAYTVRGLEHG). One copy of the Kelch 12 repeat lies at 5287–5335 (LNYTVGGLIKDNRYRFRVRAETQYGVSEPCELADVVVAKYQFEVPNQPE). One can recognise an Ig-like 14 domain in the interval 5533–5621 (PQIVVKPEDT…GSDTATANLV (89 aa)). Fibronectin type-III domains follow at residues 5723–5817 (PQGP…ARLP) and 5823–5919 (SPLN…ASGS). The stretch at 5742 to 5787 (RPPVTDGGSKITSYVVEKRDLSKDEWVTVTSNVKDMNYIVTGLFEN) is one Kelch 13 repeat. Ig-like domains follow at residues 5923 to 6011 (PKIV…ANLR) and 6016 to 6107 (PRVF…VNVT). An intrachain disulfide couples Cys5944 to Cys5995. The region spanning 6114–6207 (PPRFPIIENI…PTAPVLIPGD (94 aa)) is the Fibronectin type-III 31 domain. Positions 6261 to 6516 (YDIHEELGTG…IHQALEHPWL (256 aa)) constitute a Protein kinase domain. ATP-binding positions include 6267-6275 (LGTGAFGVV) and Lys6290. Asp6382 acts as the Proton acceptor in catalysis. The tract at residues 6517-6581 (TPGNAPGRDS…SIRDAFWDRS (65 aa)) is C-terminal regulatory domain (CDR). 5 consecutive Ig-like domains span residues 6585–6673 (PRFI…VFLN), 6696–6795 (PRVE…CVLT), 6863–6952 (PSFT…ATLT), 6958–7059 (PLLN…ASLV), and 7067–7149 (PPVT…KAIA).

The protein belongs to the protein kinase superfamily. CAMK Ser/Thr protein kinase family. As to quaternary structure, may interact (via protein kinase and CRD domains) with mak-1 (via protein kinase domain). Mg(2+) is required as a cofactor. In terms of processing, phosphorylated by mak-1 on the protein kinase domain and/or CDR domain in vitro. In terms of tissue distribution, expressed in body wall, anal, vulval, and pharyngeal muscles (at protein level).

It is found in the cytoplasm. The protein localises to the myofibril. It localises to the sarcomere. Its subcellular location is the a band. The catalysed reaction is L-seryl-[protein] + ATP = O-phospho-L-seryl-[protein] + ADP + H(+). It carries out the reaction L-threonyl-[protein] + ATP = O-phospho-L-threonyl-[protein] + ADP + H(+). Forces generated by the contraction/relaxation cycles of muscle activity separate the regulatory domain from the catalytic core, activating the enzyme. At rest, the kinase domain is in a closed conformation. The active site is occupied by the autoinhibitory region (CDR), which makes extensive contact with the catalytic site, blocking substrate binding. At low forces the regulatory tail will unravel reversibly and expose the active site to its substrates, potentially stabilized by binding of Ca/CALM. At high forces the kinase begins to unfold and the integrity of the active site is disrupted. In terms of biological role, regulator of muscle contraction and relaxation. Senses mechanical strain that occurs during muscle activity by unfolding in clearly resolvable steps at differing forces. Plays a role in the organization of sarcomeres in body wall muscles. In Caenorhabditis elegans, this protein is Twitchin.